Reading from the N-terminus, the 702-residue chain is Polyribonucleotide nucleotidyltransferase (702 aa).

Mg(2+)-binding residues include aspartate 485 and aspartate 491. The KH domain maps to proline 552–isoleucine 612. In terms of domain architecture, S1 motif spans glycine 622 to lysine 690.

Belongs to the polyribonucleotide nucleotidyltransferase family. Mg(2+) serves as cofactor.

The protein localises to the cytoplasm. The enzyme catalyses RNA(n+1) + phosphate = RNA(n) + a ribonucleoside 5'-diphosphate. Its function is as follows. Involved in mRNA degradation. Catalyzes the phosphorolysis of single-stranded polyribonucleotides processively in the 3'- to 5'-direction. This chain is Polyribonucleotide nucleotidyltransferase, found in Clostridium botulinum (strain Kyoto / Type A2).